The following is a 657-amino-acid chain: Pentatricopeptide repeat-containing protein At5g44230 (657 aa).

PPR repeat units follow at residues 45-79, 80-112, 113-147, 148-178, 183-213, 214-244, 245-279, 280-314, 317-347, 348-383, 384-419, and 420-450; these read KELL…GLDQ, SCYI…VQFR, NPFL…EITP, VSFT…TFRL, FVYV…MPER, DVIS…LPTK, DMVA…GIRA, DEVT…GYSP, HVVI…MNNK, NVFT…EIKP, NTVT…GVQP, and TRDH…MSVE. The type E motif stretch occupies residues 455–530; it reads VWGALLGACR…TPAVSWVVDK (76 aa). Residues 532-562 are type E(+) motif; sequence GQMHKFFPGNLNHPMSNKIQDKLEELVERLT. Residues 563-657 form a type DYW motif region; sequence VLGYQPDLSS…SGDCSCGDFW (95 aa).

This sequence belongs to the PPR family. PCMP-H subfamily.

This Arabidopsis thaliana (Mouse-ear cress) protein is Pentatricopeptide repeat-containing protein At5g44230 (PCMP-H17).